A 1337-amino-acid chain; its full sequence is Multidrug resistance protein fer6 (1337 aa).

The first 23 residues, 1-23, serve as a signal peptide directing secretion; the sequence is MTPEASANWFSLCWFAWIDPILT. Asn-71 carries N-linked (GlcNAc...) asparagine glycosylation. The next 2 membrane-spanning stretches (helical) occupy residues 94–114 and 138–158; these read FWIG…SPLL and LGSG…CVFL. Positions 95–386 constitute an ABC transmembrane type-1 1 domain; sequence WIGGLLKLLA…LPIAWNAIVD (292 aa). Residue Asn-187 is glycosylated (N-linked (GlcNAc...) asparagine). Helical transmembrane passes span 220–242, 247–269, 331–351, and 359–379; these read FFHM…IWSL, LPGI…RLFA, ALAF…YALV, and ILFS…FLPI. Positions 417 to 667 constitute an ABC transporter 1 domain; the sequence is IQLEDASFTW…KGRVAELLLT (251 aa). The segment at 432–460 is disordered; that stretch reads ADTAKPVNEKKGQDSPSNEKETPVDRAST. The segment covering 438 to 455 has biased composition (basic and acidic residues); it reads VNEKKGQDSPSNEKETPV. Asn-465 carries N-linked (GlcNAc...) asparagine glycosylation. 478 to 485 contributes to the ATP binding site; the sequence is GGVGSGKS. Residues 699-751 form a disordered region; sequence GSASNRNSEASESTTTTVNAESKDTSNAEGVTNKTEKKDLVAPPAQAKSKALM. A compositionally biased stretch (low complexity) spans 700 to 718; the sequence is SASNRNSEASESTTTTVNA. The N-linked (GlcNAc...) asparagine glycan is linked to Asn-731. 6 helical membrane-spanning segments follow: residues 769–789, 817–837, 890–909, 915–933, 999–1019, and 1028–1048; these read YLNA…VLVF, GIYA…GVIF, AMRT…VLIA, FLIP…AAYY, LSVR…ILVV, and GETG…GWMI. Positions 781–1056 constitute an ABC transmembrane type-1 2 domain; it reads LFLVAVLVFQ…MIRHAAELEN (276 aa). N-linked (GlcNAc...) asparagine glycosylation occurs at Asn-1057. An ABC transporter 2 domain is found at 1097–1325; the sequence is IRFEGVEAKY…EKGAFRALCD (229 aa). 1131 to 1138 lines the ATP pocket; that stretch reads GRTGAGKS. N-linked (GlcNAc...) asparagine glycosylation is present at Asn-1227.

This sequence belongs to the ABC transporter superfamily. ABCC family. Conjugate transporter (TC 3.A.1.208) subfamily.

Its subcellular location is the membrane. Functionally, multidrug resistance protein; part of the gene cluster that mediates the biosynthesis of siderophore ferrichrome A which is contributing to organismal virulence. The sequence is that of Multidrug resistance protein fer6 from Mycosarcoma maydis (Corn smut fungus).